The sequence spans 630 residues: Mannosyl-oligosaccharide 1,2-alpha-mannosidase IC (630 aa).

The Cytoplasmic portion of the chain corresponds to 1 to 22 (MLMRKVPGFVPASPWGLRLPQK). Residues 23–43 (FLFLLFLSGLVTLCFGALFLL) form a helical; Signal-anchor for type II membrane protein membrane-spanning segment. At 44–630 (PHSSRLKRLF…DSSGRAWGRH (587 aa)) the chain is on the lumenal side. Residues 74–140 (PAREQEPPPN…ASRPGDEGVP (67 aa)) form a disordered region. The segment covering 80–89 (PPPNPAPAAP) has biased composition (pro residues). The segment covering 102-113 (PRRRKGGLRRTR) has biased composition (basic residues). The residue at position 164 (Ser164) is a Phosphoserine. A glycan (N-linked (GlcNAc...) asparagine) is linked at Asn250. A disulfide bridge connects residues Cys453 and Cys485. Glu499 functions as the Proton donor in the catalytic mechanism. Thr610 lines the Ca(2+) pocket. N-linked (GlcNAc...) asparagine glycosylation is present at Asn618.

It belongs to the glycosyl hydrolase 47 family. Requires Ca(2+) as cofactor. In terms of tissue distribution, expressed in most tissues with the exception of lung, muscle and pancreas. Highly expressed in placenta.

The protein resides in the golgi apparatus membrane. The enzyme catalyses N(4)-(alpha-D-Man-(1-&gt;2)-alpha-D-Man-(1-&gt;2)-alpha-D-Man-(1-&gt;3)-[alpha-D-Man-(1-&gt;2)-alpha-D-Man-(1-&gt;3)-[alpha-D-Man-(1-&gt;2)-alpha-D-Man-(1-&gt;6)]-alpha-D-Man-(1-&gt;6)]-beta-D-Man-(1-&gt;4)-beta-D-GlcNAc-(1-&gt;4)-beta-D-GlcNAc)-L-asparaginyl-[protein] (N-glucan mannose isomer 9A1,2,3B1,2,3) + 4 H2O = N(4)-(alpha-D-Man-(1-&gt;3)-[alpha-D-Man-(1-&gt;3)-[alpha-D-Man-(1-&gt;6)]-alpha-D-Man-(1-&gt;6)]-beta-D-Man-(1-&gt;4)-beta-D-GlcNAc-(1-&gt;4)-beta-D-GlcNAc)-L-asparaginyl-[protein] (N-glucan mannose isomer 5A1,2) + 4 beta-D-mannose. The catalysed reaction is N(4)-(alpha-D-Man-(1-&gt;2)-alpha-D-Man-(1-&gt;2)-alpha-D-Man-(1-&gt;3)-[alpha-D-Man-(1-&gt;3)-[alpha-D-Man-(1-&gt;2)-alpha-D-Man-(1-&gt;6)]-alpha-D-Man-(1-&gt;6)]-beta-D-Man-(1-&gt;4)-beta-D-GlcNAc-(1-&gt;4)-beta-D-GlcNAc)-L-asparaginyl-[protein] (N-glucan mannose isomer 8A1,2,3B1,3) + 3 H2O = N(4)-(alpha-D-Man-(1-&gt;3)-[alpha-D-Man-(1-&gt;3)-[alpha-D-Man-(1-&gt;6)]-alpha-D-Man-(1-&gt;6)]-beta-D-Man-(1-&gt;4)-beta-D-GlcNAc-(1-&gt;4)-beta-D-GlcNAc)-L-asparaginyl-[protein] (N-glucan mannose isomer 5A1,2) + 3 beta-D-mannose. It functions in the pathway protein modification; protein glycosylation. Its activity is regulated as follows. Inhibited by both 1-deoxymannojirimycin and kifunensine. Functionally, involved in the maturation of Asn-linked oligosaccharides. Trim alpha-1,2-linked mannose residues from Man(9)GlcNAc(2) to produce first Man(8)GlcNAc(2) then Man(6)GlcNAc and a small amount of Man(5)GlcNAc. In Homo sapiens (Human), this protein is Mannosyl-oligosaccharide 1,2-alpha-mannosidase IC (MAN1C1).